The primary structure comprises 61 residues: U-poneritoxin(01)-Om5b (61 aa).

An N-terminal signal peptide occupies residues 1-23 (MKLSALSLAFAIILMMTIMYTKA). Positions 24 to 41 (DADASADAEADADAEAEA) are excised as a propeptide. Gln59 bears the Glutamine amide mark.

It belongs to the formicidae venom precursor-01 superfamily. In terms of processing, truncated sequences of this peptide have also been found in the venom. It is possible they have been cleaved in the venom. As to expression, expressed by the venom gland.

Its subcellular location is the secreted. In terms of biological role, acidic peptide with potent hemolytic activities. It also shows low antimicrobial activities against E.coli (MIC=50uM), as well as histamine-releasing activity (28.3% at 10 uM). Does not have activity against S.aureus, and S.cerevisiae. This Odontomachus monticola (Trap-jaw ant) protein is U-poneritoxin(01)-Om5b.